Consider the following 198-residue polypeptide: Glycerol-3-phosphate acyltransferase (198 aa).

5 consecutive transmembrane segments (helical) span residues 5–25 (LILL…LWIG), 56–76 (SIVT…PFFF), 84–104 (FWLL…FAGF), 114–134 (AGVI…VFLV), and 158–178 (LFMG…FVIW).

This sequence belongs to the PlsY family. Probably interacts with PlsX.

It is found in the cell membrane. It carries out the reaction an acyl phosphate + sn-glycerol 3-phosphate = a 1-acyl-sn-glycero-3-phosphate + phosphate. It participates in lipid metabolism; phospholipid metabolism. Catalyzes the transfer of an acyl group from acyl-phosphate (acyl-PO(4)) to glycerol-3-phosphate (G3P) to form lysophosphatidic acid (LPA). This enzyme utilizes acyl-phosphate as fatty acyl donor, but not acyl-CoA or acyl-ACP. This chain is Glycerol-3-phosphate acyltransferase, found in Listeria monocytogenes serotype 4b (strain CLIP80459).